Consider the following 328-residue polypeptide: Neuronal membrane glycoprotein M6-b (328 aa).

The interval 1–22 (MKPAMETAAEENTEQSQERKVN) is disordered. A helical membrane pass occupies residues 71-91 (GGVPYASLVATILCFSGVALF). The N-linked (GlcNAc...) asparagine glycan is linked to Asn-113. 2 helical membrane passes run 130 to 150 (VIYG…AEGF) and 176 to 196 (FVFL…FSAV). A glycan (N-linked (GlcNAc...) asparagine) is linked at Asn-217. Residues 265–285 (FIVACAGAGATVIALIHFLMI) traverse the membrane as a helical segment. 3 positions are modified to phosphoserine: Ser-318, Ser-320, and Ser-326.

The protein belongs to the myelin proteolipid protein family. As to quaternary structure, interacts with SERT. In terms of tissue distribution, widely expressed. In the brain, expressed in neurons and oligodendrocytes.

The protein resides in the membrane. Its subcellular location is the cell membrane. Its function is as follows. May be involved in neural development. Involved in regulation of osteoblast function and bone formation. Involved in matrix vesicle release by osteoblasts; this function seems to involve maintenance of the actin cytoskeleton. May be involved in cellular trafficking of SERT and thereby in regulation of serotonin uptake. This chain is Neuronal membrane glycoprotein M6-b (Gpm6b), found in Mus musculus (Mouse).